The sequence spans 727 residues: LIM domain-binding protein 3 (727 aa).

The PDZ domain occupies 1 to 84; that stretch reads MSYSVTLTGP…NLSLTLQKSK (84 aa). Phosphoserine is present on residues serine 44, serine 121, and serine 123. Residues 86–197 are disordered; sequence PIPISTTAPP…GSSQPRQYNN (112 aa). A compositionally biased stretch (low complexity) spans 140–156; it reads PTFSPAFSRPSAFSSLA. Positions 188-197 are enriched in polar residues; sequence GSSQPRQYNN. Phosphoserine is present on serine 217. Residue arginine 219 is modified to Omega-N-methylarginine. Serine 223 is modified (phosphoserine). 2 disordered regions span residues 284-440 and 472-529; these read TEFM…YTPS and APSV…PQVP. The span at 312 to 385 shows a compositional bias: low complexity; that stretch reads ATTPLLPASA…SAPATHTSYS (74 aa). A compositionally biased stretch (pro residues) spans 428–440; the sequence is PYTPSPAPAYTPS. The segment covering 494-513 has biased composition (polar residues); that stretch reads DSFSQKFAPGKSTTSISKQT. Residues arginine 516 and arginine 533 each carry the omega-N-methylarginine modification. LIM zinc-binding domains are found at residues 549–607, 608–667, and 668–727; these read PLCG…QFFA, PLCA…LFST, and KCHG…TINL.

As to quaternary structure, interacts via its LIM domains with various PKC isoforms. Interacts via its PDZ domain with the ACTN2 C-terminal region. Interacts with MYOZ1, MYOZ2 and MYOZ3. Expressed primarily in skeletal muscle and to a lesser extent in heart. Also detected in brain and placenta.

The protein resides in the cytoplasm. It is found in the perinuclear region. The protein localises to the cell projection. Its subcellular location is the pseudopodium. It localises to the cytoskeleton. The protein resides in the myofibril. It is found in the sarcomere. The protein localises to the z line. In terms of biological role, may function as an adapter in striated muscle to couple protein kinase C-mediated signaling via its LIM domains to the cytoskeleton. The sequence is that of LIM domain-binding protein 3 from Homo sapiens (Human).